A 367-amino-acid chain; its full sequence is UDP-N-acetylglucosamine--N-acetylmuramyl-(pentapeptide) pyrophosphoryl-undecaprenol N-acetylglucosamine transferase (367 aa).

Residues 15–17 (TGG), Asn-127, Arg-163, Ser-191, Ile-249, and Gln-294 contribute to the UDP-N-acetyl-alpha-D-glucosamine site.

This sequence belongs to the glycosyltransferase 28 family. MurG subfamily.

Its subcellular location is the cell inner membrane. The enzyme catalyses di-trans,octa-cis-undecaprenyl diphospho-N-acetyl-alpha-D-muramoyl-L-alanyl-D-glutamyl-meso-2,6-diaminopimeloyl-D-alanyl-D-alanine + UDP-N-acetyl-alpha-D-glucosamine = di-trans,octa-cis-undecaprenyl diphospho-[N-acetyl-alpha-D-glucosaminyl-(1-&gt;4)]-N-acetyl-alpha-D-muramoyl-L-alanyl-D-glutamyl-meso-2,6-diaminopimeloyl-D-alanyl-D-alanine + UDP + H(+). It functions in the pathway cell wall biogenesis; peptidoglycan biosynthesis. In terms of biological role, cell wall formation. Catalyzes the transfer of a GlcNAc subunit on undecaprenyl-pyrophosphoryl-MurNAc-pentapeptide (lipid intermediate I) to form undecaprenyl-pyrophosphoryl-MurNAc-(pentapeptide)GlcNAc (lipid intermediate II). The polypeptide is UDP-N-acetylglucosamine--N-acetylmuramyl-(pentapeptide) pyrophosphoryl-undecaprenol N-acetylglucosamine transferase (Burkholderia multivorans (strain ATCC 17616 / 249)).